Consider the following 274-residue polypeptide: Diaminopimelate epimerase (274 aa).

Residues Asn11, Gln44, and Asn64 each coordinate substrate. Residue Cys73 is the Proton donor of the active site. Substrate is bound by residues 74-75, Asn157, Asn190, and 208-209; these read GN and ER. The Proton acceptor role is filled by Cys217. 218 to 219 contacts substrate; it reads GS.

It belongs to the diaminopimelate epimerase family. Homodimer.

Its subcellular location is the cytoplasm. The catalysed reaction is (2S,6S)-2,6-diaminopimelate = meso-2,6-diaminopimelate. Its pathway is amino-acid biosynthesis; L-lysine biosynthesis via DAP pathway; DL-2,6-diaminopimelate from LL-2,6-diaminopimelate: step 1/1. In terms of biological role, catalyzes the stereoinversion of LL-2,6-diaminopimelate (L,L-DAP) to meso-diaminopimelate (meso-DAP), a precursor of L-lysine and an essential component of the bacterial peptidoglycan. The chain is Diaminopimelate epimerase from Histophilus somni (strain 2336) (Haemophilus somnus).